The chain runs to 194 residues: dCTP deaminase (194 aa).

Residues 110–115 (RSSLAR), aspartate 128, 136–138 (VLE), tyrosine 171, lysine 178, and glutamine 182 each bind dCTP. The Proton donor/acceptor role is filled by glutamate 138.

It belongs to the dCTP deaminase family. Homotrimer.

It catalyses the reaction dCTP + H2O + H(+) = dUTP + NH4(+). It functions in the pathway pyrimidine metabolism; dUMP biosynthesis; dUMP from dCTP (dUTP route): step 1/2. In terms of biological role, catalyzes the deamination of dCTP to dUTP. This Psychromonas ingrahamii (strain DSM 17664 / CCUG 51855 / 37) protein is dCTP deaminase.